The sequence spans 256 residues: uncharacterized protein (256 aa).

The first 22 residues, 1 to 22, serve as a signal peptide directing secretion; sequence MKSIKRIGLCISLLILSIFVTS. Residue Cys23 is the site of N-palmitoyl cysteine attachment. Cys23 carries the S-diacylglycerol cysteine lipid modification.

Belongs to the staphylococcal tandem lipoprotein family.

The protein localises to the cell membrane. This is an uncharacterized protein from Staphylococcus aureus (strain USA300).